A 460-amino-acid polypeptide reads, in one-letter code: Phosphoglucomutase (460 aa).

Catalysis depends on S103, which acts as the Phosphoserine intermediate. S103 is a Mg(2+) binding site. Substrate-binding positions include 103–104 and K113; that span reads SH. Mg(2+)-binding residues include D239, D241, and D243. Substrate is bound by residues 243–244, T303, and 322–324; these read DR and EMS.

The protein belongs to the phosphohexose mutase family. It depends on Mg(2+) as a cofactor.

It localises to the cytoplasm. It carries out the reaction alpha-D-glucose 1-phosphate = alpha-D-glucose 6-phosphate. Functionally, this enzyme participates in both the breakdown and synthesis of glucose. This is Phosphoglucomutase (pgm) from Neisseria meningitidis serogroup A / serotype 4A (strain DSM 15465 / Z2491).